A 366-amino-acid polypeptide reads, in one-letter code: tRNA(Met) cytidine acetate ligase (366 aa).

ATP contacts are provided by residues 7-20, glycine 96, asparagine 152, and arginine 175; that span reads IAEF…HQYL.

The protein belongs to the TmcAL family.

Its subcellular location is the cytoplasm. The catalysed reaction is cytidine(34) in elongator tRNA(Met) + acetate + ATP = N(4)-acetylcytidine(34) in elongator tRNA(Met) + AMP + diphosphate. In terms of biological role, catalyzes the formation of N(4)-acetylcytidine (ac(4)C) at the wobble position of elongator tRNA(Met), using acetate and ATP as substrates. First activates an acetate ion to form acetyladenylate (Ac-AMP) and then transfers the acetyl group to tRNA to form ac(4)C34. In Streptococcus equi subsp. zooepidemicus (strain H70), this protein is tRNA(Met) cytidine acetate ligase.